Consider the following 207-residue polypeptide: ATP-dependent Clp protease proteolytic subunit (207 aa).

Catalysis depends on Ser-111, which acts as the Nucleophile. Residue His-136 is part of the active site.

It belongs to the peptidase S14 family. As to quaternary structure, fourteen ClpP subunits assemble into 2 heptameric rings which stack back to back to give a disk-like structure with a central cavity, resembling the structure of eukaryotic proteasomes.

It is found in the cytoplasm. The catalysed reaction is Hydrolysis of proteins to small peptides in the presence of ATP and magnesium. alpha-casein is the usual test substrate. In the absence of ATP, only oligopeptides shorter than five residues are hydrolyzed (such as succinyl-Leu-Tyr-|-NHMec, and Leu-Tyr-Leu-|-Tyr-Trp, in which cleavage of the -Tyr-|-Leu- and -Tyr-|-Trp bonds also occurs).. In terms of biological role, cleaves peptides in various proteins in a process that requires ATP hydrolysis. Has a chymotrypsin-like activity. Plays a major role in the degradation of misfolded proteins. The chain is ATP-dependent Clp protease proteolytic subunit from Aeromonas salmonicida (strain A449).